A 121-amino-acid chain; its full sequence is Large ribosomal subunit protein bL12 (121 aa).

It belongs to the bacterial ribosomal protein bL12 family. In terms of assembly, homodimer. Part of the ribosomal stalk of the 50S ribosomal subunit. Forms a multimeric L10(L12)X complex, where L10 forms an elongated spine to which 2 to 4 L12 dimers bind in a sequential fashion. Binds GTP-bound translation factors.

Functionally, forms part of the ribosomal stalk which helps the ribosome interact with GTP-bound translation factors. Is thus essential for accurate translation. The chain is Large ribosomal subunit protein bL12 from Alkaliphilus oremlandii (strain OhILAs) (Clostridium oremlandii (strain OhILAs)).